Reading from the N-terminus, the 124-residue chain is WAP four-disulfide core domain protein 2 (124 aa).

The first 27 residues, M1–G27, serve as a signal peptide directing secretion. 2 consecutive WAP domains span residues E29–P73 and N74–I123. Intrachain disulfides connect C36-C62, C45-C66, C49-C61, C55-C70, C80-C110, C93-C114, C97-C109, and C103-C119. The N-linked (GlcNAc...) asparagine glycan is linked to N44.

As to quaternary structure, homotrimer; disulfide-linked. As to expression, epididymis. Highest levels are found in the caput and proximal cauda regions. Lower levels in the distal cauda. Not detected in the efferent ducts.

It is found in the secreted. In terms of biological role, broad range protease inhibitor. Possible function in sperm maturation. In Canis lupus familiaris (Dog), this protein is WAP four-disulfide core domain protein 2 (WFDC2).